We begin with the raw amino-acid sequence, 314 residues long: Ribosomal protein L11 methyltransferase (314 aa).

Thr-164, Gly-185, Asp-207, and Asn-249 together coordinate S-adenosyl-L-methionine.

It belongs to the methyltransferase superfamily. PrmA family.

Its subcellular location is the cytoplasm. It carries out the reaction L-lysyl-[protein] + 3 S-adenosyl-L-methionine = N(6),N(6),N(6)-trimethyl-L-lysyl-[protein] + 3 S-adenosyl-L-homocysteine + 3 H(+). Methylates ribosomal protein L11. This chain is Ribosomal protein L11 methyltransferase, found in Clostridium beijerinckii (strain ATCC 51743 / NCIMB 8052) (Clostridium acetobutylicum).